Reading from the N-terminus, the 148-residue chain is Large ribosomal subunit protein uL15 (148 aa).

The interval 1–51 (MNLSSLKPAEGAVKSRKRIGRGPGSGLGGTSTRGHKGAKSRSGYSKKIGFE) is disordered. A compositionally biased stretch (gly residues) spans 21-31 (RGPGSGLGGTS).

Belongs to the universal ribosomal protein uL15 family. As to quaternary structure, part of the 50S ribosomal subunit.

Binds to the 23S rRNA. This chain is Large ribosomal subunit protein uL15, found in Porphyromonas gingivalis (strain ATCC BAA-308 / W83).